We begin with the raw amino-acid sequence, 66 residues long: Conotoxin Lt3.5 (66 aa).

Residues Met1–Ala20 form the signal peptide. Positions Val21 to Arg53 are excised as a propeptide. Intrachain disulfides connect Cys54–Cys66, Cys55–Cys62, and Cys59–Cys65. At Pro64 the chain carries 4-hydroxyproline.

The protein belongs to the conotoxin M superfamily. As to expression, expressed by the venom duct.

The protein localises to the secreted. In Conus litteratus (Lettered cone), this protein is Conotoxin Lt3.5.